A 122-amino-acid chain; its full sequence is MIQMQSQLNVADNSGAKRVQCIKVLGGSHRRYARIGDIIKVAVKEASPRGKVKKGDVHTAVVVRTKKGVRRTDGSAIRFDENAAVMLNANLQPIGTRIFGPVTRELRNEKFMKIVSLAPEVL.

It belongs to the universal ribosomal protein uL14 family. As to quaternary structure, part of the 50S ribosomal subunit. Forms a cluster with proteins L3 and L19. In the 70S ribosome, L14 and L19 interact and together make contacts with the 16S rRNA in bridges B5 and B8.

Binds to 23S rRNA. Forms part of two intersubunit bridges in the 70S ribosome. The sequence is that of Large ribosomal subunit protein uL14 from Colwellia psychrerythraea (strain 34H / ATCC BAA-681) (Vibrio psychroerythus).